Consider the following 152-residue polypeptide: Ribosome maturation factor RimP (152 aa).

It belongs to the RimP family.

Its subcellular location is the cytoplasm. In terms of biological role, required for maturation of 30S ribosomal subunits. This is Ribosome maturation factor RimP from Teredinibacter turnerae (strain ATCC 39867 / T7901).